Reading from the N-terminus, the 660-residue chain is UvrABC system protein B (660 aa).

Positions 25–183 (EGLNKGLKHQ…ALINIHYERN (159 aa)) constitute a Helicase ATP-binding domain. Position 38-45 (38-45 (GVTGSGKT)) interacts with ATP. The Beta-hairpin signature appears at 91–114 (YYDYYQPEAYLPTTDTYIEKDSSV). The Helicase C-terminal domain occupies 431–593 (QIDDLIGEVN…IVPQTIHKAL (163 aa)). The UVR domain maps to 622 to 657 (ADMVIELEAEMHLAAKNLEFERAAALRDNIKELRST).

The protein belongs to the UvrB family. As to quaternary structure, forms a heterotetramer with UvrA during the search for lesions. Interacts with UvrC in an incision complex.

It is found in the cytoplasm. The UvrABC repair system catalyzes the recognition and processing of DNA lesions. A damage recognition complex composed of 2 UvrA and 2 UvrB subunits scans DNA for abnormalities. Upon binding of the UvrA(2)B(2) complex to a putative damaged site, the DNA wraps around one UvrB monomer. DNA wrap is dependent on ATP binding by UvrB and probably causes local melting of the DNA helix, facilitating insertion of UvrB beta-hairpin between the DNA strands. Then UvrB probes one DNA strand for the presence of a lesion. If a lesion is found the UvrA subunits dissociate and the UvrB-DNA preincision complex is formed. This complex is subsequently bound by UvrC and the second UvrB is released. If no lesion is found, the DNA wraps around the other UvrB subunit that will check the other stand for damage. The protein is UvrABC system protein B of Methanococcoides burtonii (strain DSM 6242 / NBRC 107633 / OCM 468 / ACE-M).